The chain runs to 549 residues: MGVVAEVWRSSVRLLTNSPQLNGGSHKSALWKWRFFSAQPKRTVMWTWVCGFMLFSLGVISLFTGHVVSHLEWYSQQLSKRSLLDMSRREPIDVWKSKYSKFFYGCSERGRNFLPAVQEQSSNGYLLIAASGGLNQQRTGITDAVVVARILNATLVVPELDHHSYWKDDSDFSDIFDVNWFISSLAKDVTIVKRVPDRVMRAMEKPPYTTRVPRKSTLEYYLDQVLPILTRRHVLQLTKFDYRLANDLDEDMQKLRCRVNYHALRFTKRIQSVGMKVVKRMRKMAKRFIAVHLRFEPDMLAFSGCDFGGGEKERAELAEIRKRWDTLPDLDPLEERKRGKCPLTPHEVGLMLRALGFTNDTYIYVASGEIYGGEKTLKPLRELFPNFYTKEMLANDELKPLLPYSSRLAAIDYIVSDESDVFITNNNGNMAKILAGRRRYMGHKRTIRPNAKKLSALFMDREKMEWQTFAKKVKSCQRGFMGDPDEFKPGRGEFHEYPQSCICQRPFSYDKTSTDDEEEDMSEENHNSTSPGHVHLSSADNERDEVFPD.

A helical; Signal-anchor for type II membrane protein transmembrane segment spans residues 43–63 (TVMWTWVCGFMLFSLGVISLF). N-linked (GlcNAc...) asparagine glycosylation is present at N152. Substrate is bound at residue 292–294 (HLR). N359 and N527 each carry an N-linked (GlcNAc...) asparagine glycan. The disordered stretch occupies residues 506–549 (PFSYDKTSTDDEEEDMSEENHNSTSPGHVHLSSADNERDEVFPD). The segment covering 540–549 (DNERDEVFPD) has biased composition (basic and acidic residues).

The protein belongs to the glycosyltransferase GT106 family.

It is found in the membrane. It functions in the pathway glycan metabolism. The protein is O-fucosyltransferase 29 of Arabidopsis thaliana (Mouse-ear cress).